A 327-amino-acid chain; its full sequence is tRNA N6-adenosine threonylcarbamoyltransferase (327 aa).

Fe cation-binding residues include histidine 107 and histidine 111. Residues 129 to 133, aspartate 162, glycine 175, and asparagine 263 contribute to the substrate site; that span reads LVSGG. Fe cation is bound at residue aspartate 291.

The protein belongs to the KAE1 / TsaD family. It depends on Fe(2+) as a cofactor.

The protein resides in the cytoplasm. The catalysed reaction is L-threonylcarbamoyladenylate + adenosine(37) in tRNA = N(6)-L-threonylcarbamoyladenosine(37) in tRNA + AMP + H(+). In terms of biological role, required for the formation of a threonylcarbamoyl group on adenosine at position 37 (t(6)A37) in tRNAs that read codons beginning with adenine. Is involved in the transfer of the threonylcarbamoyl moiety of threonylcarbamoyl-AMP (TC-AMP) to the N6 group of A37, together with TsaE and TsaB. TsaD likely plays a direct catalytic role in this reaction. The polypeptide is tRNA N6-adenosine threonylcarbamoyltransferase (Nautilia profundicola (strain ATCC BAA-1463 / DSM 18972 / AmH)).